The sequence spans 97 residues: YcgL domain-containing protein PA1295 (97 aa).

Positions 3-87 (RICSVYKSPR…GEEEYIEHLP (85 aa)) constitute a YcgL domain.

The polypeptide is YcgL domain-containing protein PA1295 (Pseudomonas aeruginosa (strain ATCC 15692 / DSM 22644 / CIP 104116 / JCM 14847 / LMG 12228 / 1C / PRS 101 / PAO1)).